We begin with the raw amino-acid sequence, 230 residues long: MAYPLQLGFQDATSPIMEELLHFHDHTLMIVFLISSLVLYIISTMLTTKLTHTNTMDAQEVETIWTILPAIILILIALPSLRILYMMDEINNPNLTIKTLGHQWYWSYEYSDYEDLSFDSYMIPTQDLLPGQLRLLEVDNHLVLPIELPIRMLISSEDVLHSWALPSMGLKTDAIPGRLNQATITSTRPGLFYGQCSEICGSNHSFMPIVLEMVPLKYFENWTSSMMSTS.

The Mitochondrial intermembrane segment spans residues 1 to 14 (MAYPLQLGFQDATS). Residues 15–45 (PIMEELLHFHDHTLMIVFLISSLVLYIISTM) form a helical membrane-spanning segment. Residues 46–59 (LTTKLTHTNTMDAQ) are Mitochondrial matrix-facing. Residues 60–87 (EVETIWTILPAIILILIALPSLRILYMM) form a helical membrane-spanning segment. Residues 88-230 (DEINNPNLTI…NWTSSMMSTS (143 aa)) lie on the Mitochondrial intermembrane side of the membrane. Cu cation is bound by residues His-161, Cys-196, Glu-198, Cys-200, His-204, and Met-207. Glu-198 provides a ligand contact to Mg(2+). A Phosphotyrosine modification is found at Tyr-218.

It belongs to the cytochrome c oxidase subunit 2 family. As to quaternary structure, component of the cytochrome c oxidase (complex IV, CIV), a multisubunit enzyme composed of 14 subunits. The complex is composed of a catalytic core of 3 subunits MT-CO1, MT-CO2 and MT-CO3, encoded in the mitochondrial DNA, and 11 supernumerary subunits COX4I, COX5A, COX5B, COX6A, COX6B, COX6C, COX7A, COX7B, COX7C, COX8 and NDUFA4, which are encoded in the nuclear genome. The complex exists as a monomer or a dimer and forms supercomplexes (SCs) in the inner mitochondrial membrane with NADH-ubiquinone oxidoreductase (complex I, CI) and ubiquinol-cytochrome c oxidoreductase (cytochrome b-c1 complex, complex III, CIII), resulting in different assemblies (supercomplex SCI(1)III(2)IV(1) and megacomplex MCI(2)III(2)IV(2)). Found in a complex with TMEM177, COA6, COX18, COX20, SCO1 and SCO2. Interacts with TMEM177 in a COX20-dependent manner. Interacts with COX20. Interacts with COX16. Cu cation is required as a cofactor.

Its subcellular location is the mitochondrion inner membrane. The catalysed reaction is 4 Fe(II)-[cytochrome c] + O2 + 8 H(+)(in) = 4 Fe(III)-[cytochrome c] + 2 H2O + 4 H(+)(out). In terms of biological role, component of the cytochrome c oxidase, the last enzyme in the mitochondrial electron transport chain which drives oxidative phosphorylation. The respiratory chain contains 3 multisubunit complexes succinate dehydrogenase (complex II, CII), ubiquinol-cytochrome c oxidoreductase (cytochrome b-c1 complex, complex III, CIII) and cytochrome c oxidase (complex IV, CIV), that cooperate to transfer electrons derived from NADH and succinate to molecular oxygen, creating an electrochemical gradient over the inner membrane that drives transmembrane transport and the ATP synthase. Cytochrome c oxidase is the component of the respiratory chain that catalyzes the reduction of oxygen to water. Electrons originating from reduced cytochrome c in the intermembrane space (IMS) are transferred via the dinuclear copper A center (CU(A)) of subunit 2 and heme A of subunit 1 to the active site in subunit 1, a binuclear center (BNC) formed by heme A3 and copper B (CU(B)). The BNC reduces molecular oxygen to 2 water molecules using 4 electrons from cytochrome c in the IMS and 4 protons from the mitochondrial matrix. This is Cytochrome c oxidase subunit 2 (MT-CO2) from Ornithorhynchus anatinus (Duckbill platypus).